The sequence spans 181 residues: ATP synthase subunit delta (181 aa).

It belongs to the ATPase delta chain family. As to quaternary structure, F-type ATPases have 2 components, F(1) - the catalytic core - and F(0) - the membrane proton channel. F(1) has five subunits: alpha(3), beta(3), gamma(1), delta(1), epsilon(1). F(0) has three main subunits: a(1), b(2) and c(10-14). The alpha and beta chains form an alternating ring which encloses part of the gamma chain. F(1) is attached to F(0) by a central stalk formed by the gamma and epsilon chains, while a peripheral stalk is formed by the delta and b chains.

It is found in the cell membrane. F(1)F(0) ATP synthase produces ATP from ADP in the presence of a proton or sodium gradient. F-type ATPases consist of two structural domains, F(1) containing the extramembraneous catalytic core and F(0) containing the membrane proton channel, linked together by a central stalk and a peripheral stalk. During catalysis, ATP synthesis in the catalytic domain of F(1) is coupled via a rotary mechanism of the central stalk subunits to proton translocation. Its function is as follows. This protein is part of the stalk that links CF(0) to CF(1). It either transmits conformational changes from CF(0) to CF(1) or is implicated in proton conduction. The chain is ATP synthase subunit delta from Mycoplasmoides gallisepticum (strain R(low / passage 15 / clone 2)) (Mycoplasma gallisepticum).